Reading from the N-terminus, the 563-residue chain is Calnexin homolog (563 aa).

Residues 1–23 form the signal peptide; it reads MRFNAAITGALVSSATLMGQAHA. At 24–493 the chain is on the lumenal side; that stretch reads EETEKKADAT…PINAVKQVPE (470 aa). Asp-98 contacts Ca(2+). A disulfide bond links Cys-141 and Cys-175. An alpha-D-glucoside-binding residues include Tyr-145, Lys-147, Tyr-166, and Asp-173. N-linked (GlcNAc...) asparagine glycosylation is present at Asn-236. The tract at residues 241-323 is disordered; it reads EDFAPPVNPE…EKPEDWDDEE (83 aa). Residues 249 to 279 are compositionally biased toward basic and acidic residues; that stretch reads PEKEIDDPKDKKPADWVDEAKIPDPEAKKPD. The tract at residues 253–386 is p domain (Extended arm); it reads IDDPKDKKPA…RKIPNPAYFE (134 aa). Over residues 280–305 the composition is skewed to acidic residues; the sequence is DWDEDAPYEIVDEEATMPEDWLEDEP. Cysteines 337 and 343 form a disulfide. An alpha-D-glucoside is bound at residue Glu-402. Ca(2+) is bound at residue Asp-413. The helical transmembrane segment at 494-514 threads the bilayer; that stretch reads VAGGLGALLLTMILVIVGAVG. At 515 to 563 the chain is on the cytoplasmic side; it reads ASSPAPAAAAKKGKEAASAAKEKASEAVSSAADTAKGAATKRNTRSSAQ. The tract at residues 521 to 563 is disordered; that stretch reads AAAAKKGKEAASAAKEKASEAVSSAADTAKGAATKRNTRSSAQ. Basic and acidic residues predominate over residues 526-539; sequence KGKEAASAAKEKAS.

It belongs to the calreticulin family.

The protein resides in the endoplasmic reticulum membrane. In terms of biological role, interacts with newly synthesized monoglucosylated glycoproteins in the endoplasmic reticulum. It may act in assisting protein assembly and/or in the retention within the ER of unassembled protein subunits. It seems to play a major role in the quality control apparatus of the ER by the retention of incorrectly folded proteins. This Aspergillus fumigatus (strain ATCC MYA-4609 / CBS 101355 / FGSC A1100 / Af293) (Neosartorya fumigata) protein is Calnexin homolog.